The primary structure comprises 215 residues: Cytochrome b6 (215 aa).

Residues 32–52 (IFYCLGGITLTCFLVQVATGF) traverse the membrane as a helical segment. Cys35 contacts heme c. 2 residues coordinate heme b: His86 and His100. A run of 3 helical transmembrane segments spans residues 90–110 (ASMM…TGGF), 116–136 (LTWV…VTGY), and 186–206 (LHTF…FLMI). Heme b is bound by residues His187 and His202.

Belongs to the cytochrome b family. PetB subfamily. As to quaternary structure, the 4 large subunits of the cytochrome b6-f complex are cytochrome b6, subunit IV (17 kDa polypeptide, PetD), cytochrome f and the Rieske protein, while the 4 small subunits are PetG, PetL, PetM and PetN. The complex functions as a dimer. Heme b is required as a cofactor. Heme c serves as cofactor.

It localises to the plastid. The protein resides in the chloroplast thylakoid membrane. In terms of biological role, component of the cytochrome b6-f complex, which mediates electron transfer between photosystem II (PSII) and photosystem I (PSI), cyclic electron flow around PSI, and state transitions. This Ostreococcus tauri protein is Cytochrome b6.